Here is a 401-residue protein sequence, read N- to C-terminus: Lipid-A-disaccharide synthase (401 aa).

The protein belongs to the LpxB family.

The catalysed reaction is a lipid X + a UDP-2-N,3-O-bis[(3R)-3-hydroxyacyl]-alpha-D-glucosamine = a lipid A disaccharide + UDP + H(+). Its pathway is bacterial outer membrane biogenesis; LPS lipid A biosynthesis. Condensation of UDP-2,3-diacylglucosamine and 2,3-diacylglucosamine-1-phosphate to form lipid A disaccharide, a precursor of lipid A, a phosphorylated glycolipid that anchors the lipopolysaccharide to the outer membrane of the cell. In Rhodospirillum centenum (strain ATCC 51521 / SW), this protein is Lipid-A-disaccharide synthase.